Here is an 85-residue protein sequence, read N- to C-terminus: RNA-binding protein Hfq (85 aa).

The Sm domain maps to D9–P68.

The protein belongs to the Hfq family. In terms of assembly, homohexamer.

Its function is as follows. RNA chaperone that binds small regulatory RNA (sRNAs) and mRNAs to facilitate mRNA translational regulation in response to envelope stress, environmental stress and changes in metabolite concentrations. Also binds with high specificity to tRNAs. The polypeptide is RNA-binding protein Hfq (Idiomarina loihiensis (strain ATCC BAA-735 / DSM 15497 / L2-TR)).